A 295-amino-acid polypeptide reads, in one-letter code: Diaminopimelate epimerase (295 aa).

Substrate-binding residues include Asn13, Gln46, and Asn66. The active-site Proton donor is the Cys75. Substrate-binding positions include 76–77 (GN), Asn162, Asn195, and 213–214 (ER). Cys222 serves as the catalytic Proton acceptor. 223-224 (GT) contacts substrate.

Belongs to the diaminopimelate epimerase family. In terms of assembly, homodimer.

Its subcellular location is the cytoplasm. The enzyme catalyses (2S,6S)-2,6-diaminopimelate = meso-2,6-diaminopimelate. Its pathway is amino-acid biosynthesis; L-lysine biosynthesis via DAP pathway; DL-2,6-diaminopimelate from LL-2,6-diaminopimelate: step 1/1. Its function is as follows. Catalyzes the stereoinversion of LL-2,6-diaminopimelate (L,L-DAP) to meso-diaminopimelate (meso-DAP), a precursor of L-lysine and an essential component of the bacterial peptidoglycan. The sequence is that of Diaminopimelate epimerase from Psychrobacter cryohalolentis (strain ATCC BAA-1226 / DSM 17306 / VKM B-2378 / K5).